Reading from the N-terminus, the 279-residue chain is Putative pyruvate, phosphate dikinase regulatory protein (279 aa).

153 to 160 (GISRTSKT) contributes to the ADP binding site.

It belongs to the pyruvate, phosphate/water dikinase regulatory protein family. PDRP subfamily.

It catalyses the reaction N(tele)-phospho-L-histidyl/L-threonyl-[pyruvate, phosphate dikinase] + ADP = N(tele)-phospho-L-histidyl/O-phospho-L-threonyl-[pyruvate, phosphate dikinase] + AMP + H(+). It carries out the reaction N(tele)-phospho-L-histidyl/O-phospho-L-threonyl-[pyruvate, phosphate dikinase] + phosphate + H(+) = N(tele)-phospho-L-histidyl/L-threonyl-[pyruvate, phosphate dikinase] + diphosphate. Its function is as follows. Bifunctional serine/threonine kinase and phosphorylase involved in the regulation of the pyruvate, phosphate dikinase (PPDK) by catalyzing its phosphorylation/dephosphorylation. The sequence is that of Putative pyruvate, phosphate dikinase regulatory protein from Brucella abortus (strain 2308).